Consider the following 362-residue polypeptide: E3 ubiquitin-protein ligase rififylin (362 aa).

The disordered stretch occupies residues 17–37 (ETPPPQGARTQAYSNPGYSSF). The span at 24–37 (ARTQAYSNPGYSSF) shows a compositional bias: polar residues. An FYVE-type zinc finger spans residues 41-93 (TGSEPSCKACGVHFASTTRKQTCLDCKKNFCMTCSSQEGNGPRLCLLCLRFRA). One can recognise an SAP 1 domain in the interval 101 to 120 (LMKMKVKDLRDYLSLHDIST). The tract at residues 162 to 183 (LTQPQSSTVPPTSPGLPSSPAQ) is disordered. Phosphoserine is present on residues Ser-225, Ser-228, Ser-231, and Ser-239. The SAP 2 domain maps to 249-263 (IEGLTVRQLKEILAR). The RING-type zinc-finger motif lies at 315 to 350 (CKICMDSPIDCVLLECGHMVTCTKCGKRMNECPICR).

In terms of assembly, interacts with CASP8 and CASP10. Interacts with RIPK1 (via protein kinase domain); involved in RIPK1 ubiquitination. Interacts with PRR5L. Interacts (via RING-type zinc finger) with p53/TP53; involved in p53/TP53 ubiquitination. Interacts (via RING-type zinc finger) with MDM2; the interaction stabilizes MDM2. In terms of processing, autoubiquitinated. Post-translationally, palmitoylated. Undergoes caspase-mediated cleavage upon death-receptor activation, by TNFSF10 for instance. May be mediated by the caspases CASP8 and CASP10 in a negative feedback loop. As to expression, ubiquitous. Detected in cerebrum, cerebellum, midbrain, brain stem, hippocampus, striatum, liver, heart, lung, kidney, muscle, spleen and testis.

The protein localises to the cytoplasm. It is found in the cytosol. Its subcellular location is the cell membrane. The protein resides in the recycling endosome membrane. The enzyme catalyses S-ubiquitinyl-[E2 ubiquitin-conjugating enzyme]-L-cysteine + [acceptor protein]-L-lysine = [E2 ubiquitin-conjugating enzyme]-L-cysteine + N(6)-ubiquitinyl-[acceptor protein]-L-lysine.. Its pathway is protein modification; protein ubiquitination. E3 ubiquitin-protein ligase that regulates several biological processes through the ubiquitin-mediated proteasomal degradation of various target proteins. Mediates 'Lys-48'-linked polyubiquitination of PRR5L and its subsequent proteasomal degradation thereby indirectly regulating cell migration through the mTORC2 complex. Also ubiquitinates the caspases CASP8 and CASP10, promoting their proteasomal degradation, to negatively regulate apoptosis downstream of death domain receptors. Also negatively regulates the tumor necrosis factor-mediated signaling pathway through targeting of RIPK1 to ubiquitin-mediated proteasomal degradation. Negatively regulates p53/TP53 through its direct ubiquitination and targeting to proteasomal degradation. Indirectly, may also negatively regulate p53/TP53 through ubiquitination and degradation of SFN. May also play a role in endocytic recycling. This chain is E3 ubiquitin-protein ligase rififylin, found in Rattus norvegicus (Rat).